A 105-amino-acid polypeptide reads, in one-letter code: MTANRLTLSGTVCKTPTRKVSPSGIPHCQFVLEHRSVQVEAGFTRQAWCRMPVIISGKAHQAITQSITVGTPLTVSGFISSHQGRNGLNKMVLHAEQIELIDSGD.

The region spanning 1 to 102 (MTANRLTLSG…LHAEQIELID (102 aa)) is the SSB domain.

The protein belongs to the PriB family. Homodimer. Interacts with PriA and DnaT. Component of the replication restart primosome. Primosome assembly occurs via a 'hand-off' mechanism. PriA binds to replication forks, subsequently PriB then DnaT bind; DnaT then displaces ssDNA to generate the helicase loading substrate.

Involved in the restart of stalled replication forks, which reloads the replicative helicase on sites other than the origin of replication; the PriA-PriB pathway is the major replication restart pathway. During primosome assembly it facilitates complex formation between PriA and DnaT on DNA; stabilizes PriA on DNA. Stimulates the DNA unwinding activity of PriA helicase. This chain is Replication restart protein PriB, found in Serratia proteamaculans (strain 568).